Reading from the N-terminus, the 468-residue chain is MTERAGLRLHDTAAGAVRDFVPLREGHVSIYLCGATVQGLPHIGHVRSGVAFDILRRWLMARGFDVAFIRNVTDIDDKILNKAAAAERPWWEWAATYERAFTAAYDALDVLPPSAEPRATGHVTQMVELIERLIERGHAYAGGGDVYFDVLSYPDYGQLSGHKVDDVHQGEGVATGKRDQRDFTLWKGAKPGEPSWPTPWGRGRPGWHLECSAMARTYLGAQFDIHCGGMDLIFPHHENEIAQSRAAGDGFARYWLHNGWVTMGGEKMSKSLGNVLAIPTMLQRVRPAELRYYLGSAHYRSMLEFSDIALQDAVNAYVGVEEFLHRVRSRAGVVVVGDWTPRFAAALDDDLSVPIALAEIHHTRAEGNRALDAGDHDAALQSASSIRAMMGILGCDPLDERWESRDETSAALAAVDVLVQAELENRQKAREERNWALADEIRNRLKNAGIEVTDTADGPQWLLGGDGK.

A Zn(2+)-binding site is contributed by Cys33. The 'HIGH' region signature appears at 35 to 45; the sequence is ATVQGLPHIGH. Positions 211, 236, and 240 each coordinate Zn(2+). Residues 267-271 carry the 'KMSKS' region motif; the sequence is KMSKS. An ATP-binding site is contributed by Lys270.

The protein belongs to the class-I aminoacyl-tRNA synthetase family. In terms of assembly, monomer. Zn(2+) is required as a cofactor.

Its subcellular location is the cytoplasm. It carries out the reaction tRNA(Cys) + L-cysteine + ATP = L-cysteinyl-tRNA(Cys) + AMP + diphosphate. The protein is Cysteine--tRNA ligase of Mycobacterium marinum (strain ATCC BAA-535 / M).